Here is a 324-residue protein sequence, read N- to C-terminus: Integrin-binding sialoprotein (324 aa).

An N-terminal signal peptide occupies residues Met-1 to Ala-16. A phosphoserine mark is found at Ser-31, Ser-67, Ser-75, Ser-76, and Ser-95. Disordered stretches follow at residues Val-60–Leu-228 and Gln-243–Ser-263. Acidic residues predominate over residues Ser-66–Ala-105. Polar residues predominate over residues Glu-106–Thr-130. Asn-107 carries an N-linked (GlcNAc...) asparagine glycan. A compositionally biased stretch (basic and acidic residues) spans Lys-141–Glu-154. Position 155 is a phosphoserine (Ser-155). The span at Ser-155–Glu-179 shows a compositional bias: acidic residues. N-linked (GlcNAc...) asparagine glycans are attached at residues Asn-183, Asn-188, and Asn-196. Residues Asn-203–Ser-213 are compositionally biased toward acidic residues. The segment covering Gly-253–Ser-263 has biased composition (polar residues). Residues Arg-293–Asp-295 carry the Integrin-binding motif motif. Sulfotyrosine is present on residues Tyr-320 and Tyr-321.

In terms of assembly, monomer. Interacts with integrins; the interaction promotes cell adhesion.

Its subcellular location is the secreted. Its function is as follows. Binds tightly to hydroxyapatite. Appears to form an integral part of the mineralized matrix. Probably important to cell-matrix interaction. Promotes adhesion and migration of various cells via the alpha-V/beta-3 integrin receptor (ITGAV:ITGB3). This chain is Integrin-binding sialoprotein (Ibsp), found in Mus musculus (Mouse).